The chain runs to 853 residues: MICAL-like protein 1 (853 aa).

Positions 2–108 (AGPRGALLAW…YVSQYYNHFA (107 aa)) constitute a Calponin-homology (CH) domain. 2 disordered regions span residues 118–162 (PRKG…TPSS) and 224–659 (SGRS…FPLI). Residues 145–162 (ECSSGSLSKQGSHRTPSS) show a composition bias toward polar residues. The LIM zinc-binding domain maps to 162–224 (STCAACQQHV…AEHCARLGPS (63 aa)). Residues Ser-292 and Ser-306 each carry the phosphoserine modification. Phosphothreonine is present on residues Thr-312 and Thr-315. Residues 355-366 (LSERTPAPRKDP) show a composition bias toward basic and acidic residues. A compositionally biased stretch (pro residues) spans 381–394 (APLPPSSSPGPPPG). Ser-388 carries the post-translational modification Phosphoserine. Residues 419–421 (NPF) carry the NPF1 motif. Residues 429–445 (PAAPSPAPGPAPTPPES) show a composition bias toward pro residues. A phosphothreonine mark is found at Thr-457 and Thr-459. Ser-460, Ser-461, Ser-474, and Ser-476 each carry phosphoserine. 2 stretches are compositionally biased toward low complexity: residues 495–515 (PSPA…APSE) and 541–553 (SASL…LSSS). Ser-568 and Ser-611 each carry phosphoserine. A compositionally biased stretch (polar residues) spans 607-618 (PGTSSPQLQVKS). The NPF2 motif lies at 623–625 (NPF). Positions 642 to 853 (KGSKPARPPA…TKSKCPGDRS (212 aa)) are mediates the interaction with RAB13 and RAB35 and intramolecular interaction with the CH domain. In terms of domain architecture, bMERB spans 661–808 (RKVQSDQYIP…EEEEDKMLEA (148 aa)). Positions 671–701 (EEDIHGEIDTIERQLDALEHRGVLLEEKLRG) form a coiled coil. The segment at 690 to 853 (HRGVLLEEKL…TKSKCPGDRS (164 aa)) is necessary and sufficient to associate with tubular recycling endosome membranes, mediate phosphatidic acid-binding and membrane tubulation. Phosphoserine is present on Ser-730. A coiled-coil region spans residues 791 to 820 (CLDEDRQREEEEDKMLEAMIKKKEFQKETE).

Homooligomer. Interacts (via NPF1 motif) with EHD1 (via EH domain); the interaction is direct and probably recruits EHD1 to membranes. Interacts with EHD3 (via EH domain). Interacts with RAB35 (GTP-bound form); the interaction is direct and probably recruits MICALL1 to membranes. Interacts with ACAP2; the interaction is indirect through RAB35. Interacts with RAB8A (GTP-bound form); regulates RAB8A association with recycling endosomes. Interacts with RAB13 (GTP-bound form). Interacts with ARF6 (GTP-bound form). Interacts with PACSIN2 (via the SH3 domain). Interacts with DPYSL2.

It localises to the recycling endosome membrane. The protein localises to the late endosome membrane. The protein resides in the cell projection. It is found in the cilium membrane. Its subcellular location is the cytoplasm. It localises to the cytoskeleton. The protein localises to the microtubule organizing center. The protein resides in the centrosome. It is found in the centriole. Lipid-binding protein with higher affinity for phosphatidic acid, a lipid enriched in recycling endosome membranes. On endosome membranes, acts as a downstream effector of Rab proteins recruiting cytosolic proteins to regulate membrane tubulation. Involved in a late step of receptor-mediated endocytosis regulating for instance endocytosed-EGF receptor trafficking. Alternatively, regulates slow endocytic recycling of endocytosed proteins back to the plasma membrane. Also involved in cargo protein delivery to the plasma membrane. Plays a role in ciliogenesis coordination, recruits EHD1 to primary cilium where it is anchored to the centriole through interaction with tubulins. May indirectly play a role in neurite outgrowth. The sequence is that of MICAL-like protein 1 (MICALL1) from Bos taurus (Bovine).